The following is a 504-amino-acid chain: Aspartyl/glutamyl-tRNA(Asn/Gln) amidotransferase subunit B (504 aa).

This sequence belongs to the GatB/GatE family. GatB subfamily. Heterotrimer of A, B and C subunits.

The catalysed reaction is L-glutamyl-tRNA(Gln) + L-glutamine + ATP + H2O = L-glutaminyl-tRNA(Gln) + L-glutamate + ADP + phosphate + H(+). It catalyses the reaction L-aspartyl-tRNA(Asn) + L-glutamine + ATP + H2O = L-asparaginyl-tRNA(Asn) + L-glutamate + ADP + phosphate + 2 H(+). In terms of biological role, allows the formation of correctly charged Asn-tRNA(Asn) or Gln-tRNA(Gln) through the transamidation of misacylated Asp-tRNA(Asn) or Glu-tRNA(Gln) in organisms which lack either or both of asparaginyl-tRNA or glutaminyl-tRNA synthetases. The reaction takes place in the presence of glutamine and ATP through an activated phospho-Asp-tRNA(Asn) or phospho-Glu-tRNA(Gln). The polypeptide is Aspartyl/glutamyl-tRNA(Asn/Gln) amidotransferase subunit B (Rhodococcus opacus (strain B4)).